Reading from the N-terminus, the 317-residue chain is Adenine deaminase (317 aa).

Zn(2+) contacts are provided by histidine 14, histidine 16, and histidine 194. The Proton donor role is filled by glutamate 197. Zn(2+) is bound at residue aspartate 275. Aspartate 276 contributes to the substrate binding site.

This sequence belongs to the metallo-dependent hydrolases superfamily. Adenosine and AMP deaminases family. Adenine deaminase type 2 subfamily. Zn(2+) serves as cofactor.

It catalyses the reaction adenine + H2O + H(+) = hypoxanthine + NH4(+). In terms of biological role, catalyzes the hydrolytic deamination of adenine to hypoxanthine. Plays an important role in the purine salvage pathway and in nitrogen catabolism. This chain is Adenine deaminase, found in Pseudomonas syringae pv. tomato (strain ATCC BAA-871 / DC3000).